The sequence spans 184 residues: Large ribosomal subunit protein uL6 (184 aa).

It belongs to the universal ribosomal protein uL6 family. As to quaternary structure, part of the 50S ribosomal subunit.

Functionally, this protein binds to the 23S rRNA, and is important in its secondary structure. It is located near the subunit interface in the base of the L7/L12 stalk, and near the tRNA binding site of the peptidyltransferase center. The protein is Large ribosomal subunit protein uL6 of Mycoplasma genitalium (strain ATCC 33530 / DSM 19775 / NCTC 10195 / G37) (Mycoplasmoides genitalium).